Reading from the N-terminus, the 89-residue chain is Small ribosomal subunit protein uS15 (89 aa).

The protein belongs to the universal ribosomal protein uS15 family. In terms of assembly, part of the 30S ribosomal subunit. Forms a bridge to the 50S subunit in the 70S ribosome, contacting the 23S rRNA.

Functionally, one of the primary rRNA binding proteins, it binds directly to 16S rRNA where it helps nucleate assembly of the platform of the 30S subunit by binding and bridging several RNA helices of the 16S rRNA. Its function is as follows. Forms an intersubunit bridge (bridge B4) with the 23S rRNA of the 50S subunit in the ribosome. The chain is Small ribosomal subunit protein uS15 from Halalkalibacterium halodurans (strain ATCC BAA-125 / DSM 18197 / FERM 7344 / JCM 9153 / C-125) (Bacillus halodurans).